Consider the following 88-residue polypeptide: Small ribosomal subunit protein bS16 (88 aa).

This sequence belongs to the bacterial ribosomal protein bS16 family.

The chain is Small ribosomal subunit protein bS16 from Anaeromyxobacter sp. (strain Fw109-5).